A 212-amino-acid chain; its full sequence is MAQRKTNGSKLFMMVLYMVAACSAIPISDLLDRASQRSDTLHSLSTTLTQDLDSHFPPMGRVITPRPSMCHTSSLHTPIDKEQALQVSEADLLSLVRSLLQAWRDPLVILSTSANTLPHPAQNSISTKVQELLEHTKSLGDGLDILSGKFGPAAQSISSLPYRGGNDISQDRISRLTNFHFLMSCFRRDSHKIDSFLKVLRCRAAKLQPEMC.

The signal sequence occupies residues 1–24 (MAQRKTNGSKLFMMVLYMVAACSA). Intrachain disulfides connect cysteine 70–cysteine 185 and cysteine 202–cysteine 212.

It belongs to the somatotropin/prolactin family. As to expression, pituitary gland.

It localises to the secreted. This Dicentrarchus labrax (European seabass) protein is Prolactin (prl).